The primary structure comprises 457 residues: Multidrug resistance protein MdtK (457 aa).

12 helical membrane passes run 11 to 31, 53 to 73, 93 to 113, 127 to 147, 160 to 180, 189 to 209, 243 to 263, 276 to 296, 314 to 334, 350 to 370, 387 to 407, and 418 to 438; these read LLALAIPVILAQIAQTAMGFV, IWLPAILFGHGLLLALTPVIA, WLAGFVSVLIMLVLWNAGYII, AVGYLRALLWGAPGYLFFQVA, GMVMGFIGLLVNIPVNYIFIY, GGVGCGVATAAVYWVMFLAMV, LPIALALFFEVTLFAVVALLV, IALNFSSLMFVLPMSLAAAVT, AARTGLMVGVCMATLTAIFTV, VVTLAAHLMLLAAVYQISDSI, IFYITFTAYWVLGLPSGYILA, and PAGFWIGFIIGLTSAAIMMML.

It belongs to the multi antimicrobial extrusion (MATE) (TC 2.A.66.1) family. MdtK subfamily.

The protein resides in the cell inner membrane. Functionally, multidrug efflux pump that functions probably as a Na(+)/drug antiporter. This chain is Multidrug resistance protein MdtK, found in Escherichia coli O45:K1 (strain S88 / ExPEC).